The chain runs to 334 residues: Thioredoxin reductase (334 aa).

FAD is bound by residues 10–13, 39–40, Q44, N53, V86, C143, D287, and 294–296; these read SGPA, IA, and RQA. A disulfide bridge links C140 with C143.

The protein belongs to the class-II pyridine nucleotide-disulfide oxidoreductase family. In terms of assembly, homodimer. Requires FAD as cofactor.

The protein localises to the cytoplasm. It carries out the reaction [thioredoxin]-dithiol + NADP(+) = [thioredoxin]-disulfide + NADPH + H(+). The sequence is that of Thioredoxin reductase (cys-9) from Neurospora crassa (strain ATCC 24698 / 74-OR23-1A / CBS 708.71 / DSM 1257 / FGSC 987).